Reading from the N-terminus, the 347-residue chain is NADH-ubiquinone oxidoreductase chain 2 (347 aa).

The next 10 membrane-spanning stretches (helical) occupy residues 3-23, 25-45, 59-79, 96-116, 127-147, 150-170, 193-213, 240-260, 274-294, and 323-343; these read PIILMFIMLTIFMGTMLTMIS, HWLLMWVGLEINMLAIIPILM, YFLTQATASMLLMFSIVINTA, LVTMAALMMKLGMTPFHFWVP, GMLLLTWQKLAPISILLQIFP, NPNIILLIAILSILVGGWGGL, ILMYWPSLTMLNLLIYLMLTI, ITLTILISLLSLGGLPPLTGF, SNIMLATIMAIMALLNLYFYM, and IFLLSPLVILATLTLPLSPAL.

The protein belongs to the complex I subunit 2 family. As to quaternary structure, core subunit of respiratory chain NADH dehydrogenase (Complex I) which is composed of 45 different subunits. Interacts with TMEM242.

Its subcellular location is the mitochondrion inner membrane. It carries out the reaction a ubiquinone + NADH + 5 H(+)(in) = a ubiquinol + NAD(+) + 4 H(+)(out). In terms of biological role, core subunit of the mitochondrial membrane respiratory chain NADH dehydrogenase (Complex I) which catalyzes electron transfer from NADH through the respiratory chain, using ubiquinone as an electron acceptor. Essential for the catalytic activity and assembly of complex I. The protein is NADH-ubiquinone oxidoreductase chain 2 of Lemur catta (Ring-tailed lemur).